A 164-amino-acid chain; its full sequence is MKSVVTTVVTAADAAGRFPSQNDLEAVQGNIQRAAARLEAAEKLAAGLDAVTKEAGDACFNKYPYLKQPGEAGENQTKVDKCYRDLGHYLRLINYCLVVGGTGPLDEWGIAGAREVYRTLGLPTGPYVEALTYTRDRACAPRDMSPQALNEFKSYLDYVINALS.

(2R,3E)-phycoerythrobilin-binding residues include C82 and C139.

This sequence belongs to the phycobiliprotein family. As to quaternary structure, heterodimer of an alpha and a beta chain. Contains one covalently linked bilin chromophore.

The protein localises to the cellular thylakoid membrane. Functionally, light-harvesting photosynthetic bile pigment-protein from the phycobiliprotein complex. In Synechococcus sp. (strain WH7803), this protein is C-phycoerythrin class 1 subunit alpha (cpeA).